The chain runs to 797 residues: Inactive dipeptidyl peptidase 10 (797 aa).

The segment at 1–28 (MKQEQQPTPGARATQSQPADQELGSNSP) is disordered. Over 1-34 (MKQEQQPTPGARATQSQPADQELGSNSPPQRNWK) the chain is Cytoplasmic. The chain crosses the membrane as a helical; Signal-anchor for type II membrane protein span at residues 35-55 (GIAIALLVILVVCSLITMSVI). At 56–797 (LLTPDELTNS…VLPQEPEEDE (742 aa)) the chain is on the extracellular side. 4 N-linked (GlcNAc...) asparagine glycosylation sites follow: Asn-64, Asn-91, Asn-112, and Asn-120. Phosphotyrosine occurs at positions 139 and 144. 4 N-linked (GlcNAc...) asparagine glycosylation sites follow: Asn-258, Asn-343, Asn-518, and Asn-749.

It belongs to the peptidase S9B family. DPPIV subfamily. As to quaternary structure, may form oligomers. Interacts with KCND1 and KCND2. In terms of processing, N-glycosylation is important for cell surface expression, specially at Asn-258, which is crucial. In terms of tissue distribution, detected in brain cortex (at protein level). Expressed in the brain, predominantly by neurons and not by glia.

The protein resides in the cell membrane. Functionally, promotes cell surface expression of the potassium channel KCND2. Modulates the activity and gating characteristics of the potassium channel KCND2. Has no dipeptidyl aminopeptidase activity. This Mus musculus (Mouse) protein is Inactive dipeptidyl peptidase 10 (Dpp10).